Reading from the N-terminus, the 178-residue chain is Inorganic pyrophosphatase (178 aa).

Residues lysine 29, arginine 43, and tyrosine 55 each coordinate substrate. Mg(2+)-binding residues include aspartate 65, aspartate 70, and aspartate 102. Tyrosine 141 contributes to the substrate binding site.

This sequence belongs to the PPase family. In terms of assembly, homohexamer. Mg(2+) serves as cofactor.

It localises to the cytoplasm. It carries out the reaction diphosphate + H2O = 2 phosphate + H(+). Functionally, catalyzes the hydrolysis of inorganic pyrophosphate (PPi) forming two phosphate ions. The chain is Inorganic pyrophosphatase from Rickettsia typhi (strain ATCC VR-144 / Wilmington).